The sequence spans 431 residues: Peptidase B (431 aa).

Positions 196 and 201 each coordinate Mn(2+). Lys-208 is an active-site residue. Residues Asp-219, Asp-278, and Glu-280 each coordinate Mn(2+). Arg-282 is an active-site residue.

The protein belongs to the peptidase M17 family. As to quaternary structure, homohexamer. It depends on Mn(2+) as a cofactor.

The protein resides in the cytoplasm. It catalyses the reaction Release of an N-terminal amino acid, Xaa, from a peptide or arylamide. Xaa is preferably Glu or Asp but may be other amino acids, including Leu, Met, His, Cys and Gln.. In terms of biological role, probably plays an important role in intracellular peptide degradation. The polypeptide is Peptidase B (Photorhabdus laumondii subsp. laumondii (strain DSM 15139 / CIP 105565 / TT01) (Photorhabdus luminescens subsp. laumondii)).